A 326-amino-acid chain; its full sequence is L-lactate dehydrogenase (326 aa).

39–60 is an NAD(+) binding site; the sequence is DVVTGMPEGKALDDSQATSIAD. Substrate-binding residues include Arg-99, Asn-131, and Arg-162. An NAD(+)-binding site is contributed by Asn-131. His-186 functions as the Proton acceptor in the catalytic mechanism.

It belongs to the LDH/MDH superfamily. LDH family. As to quaternary structure, homotetramer.

The catalysed reaction is (S)-lactate + NAD(+) = pyruvate + NADH + H(+). Its pathway is fermentation; pyruvate fermentation to lactate; (S)-lactate from pyruvate: step 1/1. The polypeptide is L-lactate dehydrogenase (Toxoplasma gondii).